We begin with the raw amino-acid sequence, 103 residues long: Histone H4 (103 aa).

The segment covering 1-14 has biased composition (gly residues); sequence MSGRGKGGKGLGKG. The tract at residues 1–20 is disordered; that stretch reads MSGRGKGGKGLGKGGAKRHR. K6 bears the N6-acetyl-N6-methyllysine; alternate mark. Residues K6, K9, and K13 each carry the N6-acetyllysine; alternate modification. N6-methyllysine; alternate is present on residues K6, K9, and K13. N6-butyryllysine; alternate occurs at positions 9 and 13. Residue K13 is modified to N6-acetyl-N6-methyllysine; alternate. Residue K17 is modified to N6-acetyllysine. The DNA-binding element occupies 17–21; it reads KRHRK. K32 carries the N6-succinyllysine modification. R56 carries the omega-N-methylarginine modification. Phosphoserine is present on residues S61 and S65. N6-succinyllysine is present on K78. K80 is subject to N6-acetyllysine. Residue K92 is modified to N6-glutaryllysine.

The protein belongs to the histone H4 family. The nucleosome is a histone octamer containing two molecules each of H2A, H2B, H3 and H4 assembled in one H3-H4 heterotetramer and two H2A-H2B heterodimers. The octamer wraps approximately 147 bp of DNA. Histone H4 is a component of the UAF (upstream activation factor) complex which consists of UAF30, RRN5, RRN9, RRN10, and histones H3 and H4. Glutarylation at Lys-92 (H4K91glu) destabilizes nucleosomes by promoting dissociation of the H2A-H2B dimers from nucleosomes.

It is found in the nucleus. It localises to the chromosome. Functionally, core component of nucleosome. Nucleosomes wrap and compact DNA into chromatin, limiting DNA accessibility to the cellular machineries which require DNA as a template. Histones thereby play a central role in transcription regulation, DNA repair, DNA replication and chromosomal stability. DNA accessibility is regulated via a complex set of post-translational modifications of histones, also called histone code, and nucleosome remodeling. Component of the UAF (upstream activation factor) complex which interacts with the upstream element of the RNA polymerase I promoter and forms a stable preinitiation complex. Together with SPT15/TBP UAF seems to stimulate basal transcription to a fully activated level. The polypeptide is Histone H4 (HHF1) (Saccharomyces cerevisiae (strain ATCC 204508 / S288c) (Baker's yeast)).